Here is a 303-residue protein sequence, read N- to C-terminus: MSSARFDSSDRSAWYMGPVSRQEAQTRLQGQRHGMFLVRDSSTCPGDYVLSVSENSRVSHYIINSLPNRRFKIGDQEFDHLPALLEFYKIHYLDTTTLIEPAPRYPNPPMGSVSAPNLSTAEENLEYVRTLYDFPGNDAEDLPFKKGELLVIIEKPEEQWWSARNKDGRVGMIPVPYVEKLVRSSPHGKHGNRNSNSYGIPEPAHAYAQPQTTTPLPTVASTPGAAINPLPSTQNGPVFAKAIQKRVPCAYDKTALALEVGDIVKVTRMNINGQWEGEVNGRKGLFPFTHVKIFDPQNPDDNE.

In terms of domain architecture, SH2 spans 14–102 (WYMGPVSRQE…LDTTTLIEPA (89 aa)). Positions 123–183 (ENLEYVRTLY…PVPYVEKLVR (61 aa)) constitute an SH3 1 domain. Tyrosine 127 carries the phosphotyrosine modification. Residues 184–204 (SSPHGKHGNRNSNSYGIPEPA) form a disordered region. Tyrosine 207 carries the post-translational modification Phosphotyrosine. In terms of domain architecture, SH3 2 spans 235-296 (NGPVFAKAIQ…PFTHVKIFDP (62 aa)).

The protein belongs to the CRK family. As to quaternary structure, interacts with INPP5D/SHIP1. Interacts with DOCK2 and EPOR. Interacts with phosphorylated CBLB and IRS4. Interacts with BCAR1/CAS and NEDD9/HEF1.

In terms of biological role, may mediate the transduction of intracellular signals. This chain is Crk-like protein, found in Rattus norvegicus (Rat).